The sequence spans 253 residues: REF/SRPP-like protein OsI_017815 (253 aa).

Residues 1–26 are disordered; sequence MADSGSDAPISNRPEEEVTVEKTPEM. Residues 13–26 show a composition bias toward basic and acidic residues; sequence RPEEEVTVEKTPEM.

This sequence belongs to the REF/SRPP family.

In Oryza sativa subsp. indica (Rice), this protein is REF/SRPP-like protein OsI_017815.